The chain runs to 313 residues: Ribosomal RNA small subunit methyltransferase H (313 aa).

S-adenosyl-L-methionine is bound by residues 35–37 (GGH), D55, F79, D101, and Q108.

Belongs to the methyltransferase superfamily. RsmH family.

Its subcellular location is the cytoplasm. The enzyme catalyses cytidine(1402) in 16S rRNA + S-adenosyl-L-methionine = N(4)-methylcytidine(1402) in 16S rRNA + S-adenosyl-L-homocysteine + H(+). Specifically methylates the N4 position of cytidine in position 1402 (C1402) of 16S rRNA. This Escherichia coli O6:H1 (strain CFT073 / ATCC 700928 / UPEC) protein is Ribosomal RNA small subunit methyltransferase H.